The sequence spans 203 residues: Acireductone dioxygenase 3 (203 aa).

Residues histidine 96, histidine 98, glutamate 102, and histidine 141 each contribute to the Fe(2+) site. Histidine 96, histidine 98, glutamate 102, and histidine 141 together coordinate Ni(2+).

Belongs to the acireductone dioxygenase (ARD) family. Requires Fe(2+) as cofactor. Ni(2+) is required as a cofactor.

It localises to the cytoplasm. The protein resides in the nucleus. The enzyme catalyses 1,2-dihydroxy-5-(methylsulfanyl)pent-1-en-3-one + O2 = 4-methylsulfanyl-2-oxobutanoate + formate + 2 H(+). The catalysed reaction is 1,2-dihydroxy-5-(methylsulfanyl)pent-1-en-3-one + O2 = 3-(methylsulfanyl)propanoate + CO + formate + 2 H(+). Its pathway is amino-acid biosynthesis; L-methionine biosynthesis via salvage pathway; L-methionine from S-methyl-5-thio-alpha-D-ribose 1-phosphate: step 5/6. Its function is as follows. Catalyzes 2 different reactions between oxygen and the acireductone 1,2-dihydroxy-3-keto-5-methylthiopentene (DHK-MTPene) depending upon the metal bound in the active site. Fe-containing acireductone dioxygenase (Fe-ARD) produces formate and 2-keto-4-methylthiobutyrate (KMTB), the alpha-ketoacid precursor of methionine in the methionine recycle pathway. Ni-containing acireductone dioxygenase (Ni-ARD) produces methylthiopropionate, carbon monoxide and formate, and does not lie on the methionine recycle pathway. This chain is Acireductone dioxygenase 3, found in Physcomitrium patens (Spreading-leaved earth moss).